Consider the following 485-residue polypeptide: Cyclic GMP-AMP synthase-like receptor (485 aa).

ATP is bound by residues Ser70 and 82 to 84; that span reads EYD. The Mg(2+) site is built by Glu82, Asp84, and Asp204. GTP contacts are provided by residues Asp204 and 247-254; that span reads RLSFYEQE. The ATP site is built by Lys271 and Lys274. 2 residues coordinate Mn(2+): Ile298 and Asp304.

Belongs to the mab-21 family. It depends on Mg(2+) as a cofactor. Requires Mn(2+) as cofactor.

The catalysed reaction is GTP + ATP = 2',3'-cGAMP + 2 diphosphate. The enzyme catalyses GTP + ATP = pppGp(2'-5')A + diphosphate. It catalyses the reaction pppGp(2'-5')A = 2',3'-cGAMP + diphosphate. Its function is as follows. Nucleotidyltransferase that catalyzes the formation of cyclic GMP-AMP (2',3'-cGAMP) from ATP and GTP and plays a key role in innate immunity. Directly binds some unknown ligand, activating the nucleotidyltransferase activity, leading to synthesis of 2',3'-cGAMP, a second messenger that binds to and activates Sting, thereby triggering the immune response via activation of the NF-kappa-B transcription factor. This Trichogramma pretiosum (Parasitoid wasp) protein is Cyclic GMP-AMP synthase-like receptor.